The chain runs to 392 residues: Transcription factor GATA-4 (392 aa).

The tract at residues 75–113 (SSAYNPGTSHPPVSPRFTFSSSPPITAPSSREVSYSSPL) is disordered. The segment covering 91 to 113 (FTFSSSPPITAPSSREVSYSSPL) has biased composition (polar residues). GATA-type zinc fingers lie at residues 184 to 208 (CVNC…CNAC) and 238 to 262 (CANC…CNAC). Disordered stretches follow at residues 279 to 339 (KEGI…HSNS) and 359 to 392 (MPSL…LVLA). Residues 284–293 (TRKRKPKNLS) are compositionally biased toward basic residues. Low complexity predominate over residues 302–316 (SGSDSLTPSTSSTNS). Over residues 364-380 (LSPQNHHSTFNPSPQAN) the composition is skewed to polar residues.

Expressed at high levels in heart, small intestine, stomach, ovary, and liver. Found at much lower levels in lung, spleen, pancreas and skin.

It localises to the nucleus. Functionally, transcriptional activator that binds to the consensus sequence 5'-AGATAG-3'. Associated with cardiac specification and can regulate cardiac-specific transcription during embryogenesis. Activates the expression of cardiac MHC-alpha in vivo. The protein is Transcription factor GATA-4 (gata4) of Xenopus laevis (African clawed frog).